We begin with the raw amino-acid sequence, 253 residues long: Imidazole glycerol phosphate synthase subunit HisF (253 aa).

Active-site residues include D11 and D130.

This sequence belongs to the HisA/HisF family. As to quaternary structure, heterodimer of HisH and HisF.

Its subcellular location is the cytoplasm. It catalyses the reaction 5-[(5-phospho-1-deoxy-D-ribulos-1-ylimino)methylamino]-1-(5-phospho-beta-D-ribosyl)imidazole-4-carboxamide + L-glutamine = D-erythro-1-(imidazol-4-yl)glycerol 3-phosphate + 5-amino-1-(5-phospho-beta-D-ribosyl)imidazole-4-carboxamide + L-glutamate + H(+). Its pathway is amino-acid biosynthesis; L-histidine biosynthesis; L-histidine from 5-phospho-alpha-D-ribose 1-diphosphate: step 5/9. In terms of biological role, IGPS catalyzes the conversion of PRFAR and glutamine to IGP, AICAR and glutamate. The HisF subunit catalyzes the cyclization activity that produces IGP and AICAR from PRFAR using the ammonia provided by the HisH subunit. This Clostridium botulinum (strain 657 / Type Ba4) protein is Imidazole glycerol phosphate synthase subunit HisF.